The primary structure comprises 192 residues: dCTP deaminase, dUMP-forming (192 aa).

DCTP contacts are provided by residues 101 to 106 (KSSLGR), D119, 127 to 129 (TLE), Q148, Y162, and Q174. The Proton donor/acceptor role is filled by E129. The tract at residues 162 to 192 (YGSGADGSRYQGQRGPTASRSHVKFHRTHVE) is disordered. The segment covering 171–181 (YQGQRGPTASR) has biased composition (polar residues). Residues 182–192 (SHVKFHRTHVE) show a composition bias toward basic residues.

Belongs to the dCTP deaminase family. As to quaternary structure, homotrimer.

The catalysed reaction is dCTP + 2 H2O = dUMP + NH4(+) + diphosphate. Its pathway is pyrimidine metabolism; dUMP biosynthesis; dUMP from dCTP: step 1/1. In terms of biological role, bifunctional enzyme that catalyzes both the deamination of dCTP to dUTP and the hydrolysis of dUTP to dUMP without releasing the toxic dUTP intermediate. This is dCTP deaminase, dUMP-forming from Beutenbergia cavernae (strain ATCC BAA-8 / DSM 12333 / CCUG 43141 / JCM 11478 / NBRC 16432 / NCIMB 13614 / HKI 0122).